A 999-amino-acid polypeptide reads, in one-letter code: Embryonic polarity protein dorsal (999 aa).

Positions 1–44 are disordered; the sequence is MFPNQNNGAAPGQGPAVDGQQSLNYNGLPAQQQQQLAQSTKNVR. In terms of domain architecture, RHD spans 47–342; sequence PYVKITEQPA…TFWNLHRHLK (296 aa). Ser312 carries the phosphoserine; by PKA modification. Disordered regions lie at residues 389 to 424 and 670 to 851; these read FNHE…EQYT and QARK…SVSG. Low complexity predominate over residues 402-424; sequence EQEQSVQQEQYTQEQSLQQEQYT. The Nuclear export signal motif lies at 668-677; that stretch reads NSQARKPETP. The span at 677–686 shows a compositional bias: pro residues; that stretch reads PMRPVPPVPP. Residues 710-719 show a composition bias toward basic and acidic residues; it reads KQDSNAENRS. Over residues 720–734 the composition is skewed to polar residues; it reads IEANTVQTKPSTGES. Residues 756-773 carry the Nuclear localization signal motif; the sequence is KKPGFFSKLFSRRKSKPD. Composition is skewed to low complexity over residues 819–829 and 836–851; these read SNPAPAKSSPV and SKLT…SVSG.

Interacts with tamo via the nuclear localization signal. Interacts with emb, a component of the nuclear export complex. In terms of tissue distribution, in unchallenged larvae, expression of both isoforms is seen in fat body and gut (isoform A is more abundant). After immune challenge levels of both isoforms are enhanced.

It localises to the cytoplasm. Its subcellular location is the nucleus. In terms of biological role, embryonic developmental transcription factor. The lateral or ventral identity of a cell depends upon the concentration of this protein in its nucleus during the blastoderm stage. Acts as a morphogenetic transcription factor that specifically binds to the kappa-B-related consensus sequence 5'-GRGAAAANCC-3', located in the enhancer region of zygotic genes such as Zen, Twist, Snail and Decapentaplegic, promoting their expression. Part of a signaling pathway involving NF-kappa-B and Toll-related receptors, that functions in the apoptosis of unfit cells during cell competition. Mediates an immune response in larvae. May be part of a NF-kappa-B and Tollo signaling cascade that regulates development of the peripheral nervous system. This Drosophila melanogaster (Fruit fly) protein is Embryonic polarity protein dorsal (dl).